Reading from the N-terminus, the 89-residue chain is Small ribosomal subunit protein uS15 (89 aa).

It belongs to the universal ribosomal protein uS15 family. Part of the 30S ribosomal subunit. Forms a bridge to the 50S subunit in the 70S ribosome, contacting the 23S rRNA.

Its function is as follows. One of the primary rRNA binding proteins, it binds directly to 16S rRNA where it helps nucleate assembly of the platform of the 30S subunit by binding and bridging several RNA helices of the 16S rRNA. In terms of biological role, forms an intersubunit bridge (bridge B4) with the 23S rRNA of the 50S subunit in the ribosome. This Pseudomonas aeruginosa (strain LESB58) protein is Small ribosomal subunit protein uS15.